The chain runs to 594 residues: Aspartate--tRNA(Asp/Asn) ligase (594 aa).

E175 is a binding site for L-aspartate. Residues Q199–K202 form an aspartate region. L-aspartate contacts are provided by R221 and H455. R221 to E223 lines the ATP pocket. E488 contributes to the ATP binding site. L-aspartate is bound at residue R495. G540–R543 contributes to the ATP binding site.

This sequence belongs to the class-II aminoacyl-tRNA synthetase family. Type 1 subfamily. Homodimer.

The protein resides in the cytoplasm. It catalyses the reaction tRNA(Asx) + L-aspartate + ATP = L-aspartyl-tRNA(Asx) + AMP + diphosphate. Its function is as follows. Aspartyl-tRNA synthetase with relaxed tRNA specificity since it is able to aspartylate not only its cognate tRNA(Asp) but also tRNA(Asn). Reaction proceeds in two steps: L-aspartate is first activated by ATP to form Asp-AMP and then transferred to the acceptor end of tRNA(Asp/Asn). In Ruegeria sp. (strain TM1040) (Silicibacter sp.), this protein is Aspartate--tRNA(Asp/Asn) ligase.